Reading from the N-terminus, the 200-residue chain is Inner membrane-spanning protein YciB (200 aa).

Helical transmembrane passes span 32–52 (FVATGAFMVAIVAAVIVSYVV), 56–76 (VPLMALVTAVIVLVFGGLTLV), 93–113 (LFAVTLYVGLMLGRSFIAILF), 126–146 (FLTIRWARFFLFMAVLNEVIW), and 153–173 (FWVAFKAFGVIPLTAVFAMTQ).

This sequence belongs to the YciB family.

It is found in the cell inner membrane. In terms of biological role, plays a role in cell envelope biogenesis, maintenance of cell envelope integrity and membrane homeostasis. The sequence is that of Inner membrane-spanning protein YciB from Afipia carboxidovorans (strain ATCC 49405 / DSM 1227 / KCTC 32145 / OM5) (Oligotropha carboxidovorans).